The primary structure comprises 514 residues: 2,3-bisphosphoglycerate-independent phosphoglycerate mutase (514 aa).

Asp-14 and Ser-64 together coordinate Mn(2+). Ser-64 serves as the catalytic Phosphoserine intermediate. Substrate is bound by residues His-125, 155–156, Arg-187, Arg-193, 263–266, and Lys-336; these read RD and RADR. Mn(2+)-binding residues include Asp-403, His-407, Asp-444, His-445, and His-463.

This sequence belongs to the BPG-independent phosphoglycerate mutase family. In terms of assembly, monomer. Requires Mn(2+) as cofactor.

It carries out the reaction (2R)-2-phosphoglycerate = (2R)-3-phosphoglycerate. The protein operates within carbohydrate degradation; glycolysis; pyruvate from D-glyceraldehyde 3-phosphate: step 3/5. Functionally, catalyzes the interconversion of 2-phosphoglycerate and 3-phosphoglycerate. This is 2,3-bisphosphoglycerate-independent phosphoglycerate mutase from Salmonella choleraesuis (strain SC-B67).